The primary structure comprises 107 residues: U1-lycotoxin-Ls1s (107 aa).

Residues 1–20 (MMKVLVVVALLVTLISYSSS) form the signal peptide. Positions 21–41 (EGIDDLEADELLSLMANEQTR) are excised as a propeptide. 4 disulfides stabilise this stretch: C44–C59, C51–C68, C58–C86, and C70–C84.

It belongs to the neurotoxin 19 (CSTX) family. 04 (U1-Lctx) subfamily. In terms of tissue distribution, expressed by the venom gland.

The protein localises to the secreted. In Lycosa singoriensis (Wolf spider), this protein is U1-lycotoxin-Ls1s.